A 322-amino-acid polypeptide reads, in one-letter code: ATP-dependent 6-phosphofructokinase (322 aa).

Gly-13 lines the ATP pocket. Arg-23 to Arg-27 provides a ligand contact to ADP. Residues Arg-74–Cys-75 and Gly-104–Ser-107 each bind ATP. Position 105 (Asp-105) interacts with Mg(2+). Thr-127–Asp-129 serves as a coordination point for substrate. Catalysis depends on Asp-129, which acts as the Proton acceptor. Arg-156 lines the ADP pocket. Substrate contacts are provided by residues Arg-164 and Met-171 to Arg-173. ADP is bound by residues Gly-187 to Glu-189 and Lys-215 to His-217. Substrate contacts are provided by residues Glu-224, Arg-246, and His-252 to Arg-255.

It belongs to the phosphofructokinase type A (PFKA) family. ATP-dependent PFK group I subfamily. Prokaryotic clade 'B1' sub-subfamily. Homotetramer. It depends on Mg(2+) as a cofactor.

The protein localises to the cytoplasm. It carries out the reaction beta-D-fructose 6-phosphate + ATP = beta-D-fructose 1,6-bisphosphate + ADP + H(+). Its pathway is carbohydrate degradation; glycolysis; D-glyceraldehyde 3-phosphate and glycerone phosphate from D-glucose: step 3/4. With respect to regulation, allosterically activated by ADP and other diphosphonucleosides, and allosterically inhibited by phosphoenolpyruvate. Its function is as follows. Catalyzes the phosphorylation of D-fructose 6-phosphate to fructose 1,6-bisphosphate by ATP, the first committing step of glycolysis. This Paenibacillus macquariensis (Bacillus macquariensis) protein is ATP-dependent 6-phosphofructokinase.